We begin with the raw amino-acid sequence, 349 residues long: S-adenosylmethionine:tRNA ribosyltransferase-isomerase (349 aa).

It belongs to the QueA family. Monomer.

Its subcellular location is the cytoplasm. It catalyses the reaction 7-aminomethyl-7-carbaguanosine(34) in tRNA + S-adenosyl-L-methionine = epoxyqueuosine(34) in tRNA + adenine + L-methionine + 2 H(+). The protein operates within tRNA modification; tRNA-queuosine biosynthesis. In terms of biological role, transfers and isomerizes the ribose moiety from AdoMet to the 7-aminomethyl group of 7-deazaguanine (preQ1-tRNA) to give epoxyqueuosine (oQ-tRNA). The polypeptide is S-adenosylmethionine:tRNA ribosyltransferase-isomerase (Cupriavidus pinatubonensis (strain JMP 134 / LMG 1197) (Cupriavidus necator (strain JMP 134))).